A 294-amino-acid chain; its full sequence is NADH-cytochrome b5 reductase 2 (294 aa).

A helical transmembrane segment spans residues 11–27 (VLLPVVAAATSIGLVYH). The 105-residue stretch at 45–149 (DEWIDLKLKK…KGPIVKWKWE (105 aa)) folds into the FAD-binding FR-type domain. 152 to 187 (QFQSIALIGGGTGITPLYQLLHEITKNPEDKTKVKL) is a binding site for FAD.

It belongs to the flavoprotein pyridine nucleotide cytochrome reductase family. It depends on FAD as a cofactor.

It is found in the mitochondrion outer membrane. It catalyses the reaction 2 Fe(III)-[cytochrome b5] + NADH = 2 Fe(II)-[cytochrome b5] + NAD(+) + H(+). Functionally, may mediate the reduction of outer membrane cytochrome b5. The sequence is that of NADH-cytochrome b5 reductase 2 (MCR1) from Meyerozyma guilliermondii (strain ATCC 6260 / CBS 566 / DSM 6381 / JCM 1539 / NBRC 10279 / NRRL Y-324) (Yeast).